The primary structure comprises 242 residues: Myogenic factor 6 (242 aa).

A disordered region spans residues 30 to 63; the sequence is GSPLYPGSDGTLSPCQDQLPPEAGSDSSGEEHVL. Positions 93 to 144 constitute a bHLH domain; sequence DRRKAATLRERRRLKKINEAFEALKRRTVANPNQRLPKVEILRSAISYIERL. A disordered region spans residues 190–210; it reads ASDHSRALGGSPKAGGSMVES.

Efficient DNA binding requires dimerization with another bHLH protein. Skeletal muscle.

Its subcellular location is the nucleus. Its function is as follows. Involved in muscle differentiation (myogenic factor). Induces fibroblasts to differentiate into myoblasts. Probable sequence specific DNA-binding protein. The sequence is that of Myogenic factor 6 (MYF6) from Gallus gallus (Chicken).